A 217-amino-acid polypeptide reads, in one-letter code: Pyridoxine/pyridoxamine 5'-phosphate oxidase (217 aa).

Substrate contacts are provided by residues 13 to 16 (RREY) and Lys-71. FMN contacts are provided by residues 66–71 (RTVLLK), 81–82 (YT), Arg-87, Lys-88, and Gln-110. 3 residues coordinate substrate: Tyr-128, Arg-132, and Ser-136. FMN is bound by residues 145-146 (QS) and Trp-190. 196 to 198 (RLH) serves as a coordination point for substrate. FMN is bound at residue Arg-200.

Belongs to the pyridoxamine 5'-phosphate oxidase family. As to quaternary structure, homodimer. FMN is required as a cofactor.

The catalysed reaction is pyridoxamine 5'-phosphate + O2 + H2O = pyridoxal 5'-phosphate + H2O2 + NH4(+). The enzyme catalyses pyridoxine 5'-phosphate + O2 = pyridoxal 5'-phosphate + H2O2. Its pathway is cofactor metabolism; pyridoxal 5'-phosphate salvage; pyridoxal 5'-phosphate from pyridoxamine 5'-phosphate: step 1/1. It participates in cofactor metabolism; pyridoxal 5'-phosphate salvage; pyridoxal 5'-phosphate from pyridoxine 5'-phosphate: step 1/1. In terms of biological role, catalyzes the oxidation of either pyridoxine 5'-phosphate (PNP) or pyridoxamine 5'-phosphate (PMP) into pyridoxal 5'-phosphate (PLP). The sequence is that of Pyridoxine/pyridoxamine 5'-phosphate oxidase from Rubrobacter xylanophilus (strain DSM 9941 / JCM 11954 / NBRC 16129 / PRD-1).